The sequence spans 149 residues: Calmodulin-B (149 aa).

Ala2 is subject to N-acetylalanine. 4 consecutive EF-hand domains span residues 8–43 (EQIAEFKEAFSLFDKDGDGTITTKELGTVMRSLGQN), 44–79 (PTEAELQDMINEVDADGNGTIDFPEFLTMMARKMKE), 81–116 (DSEEEIREAFRVFDKDGNGFISAAELRHVMTNLGEK), and 117–149 (LTDEEVDEMIREADIDGDGQVNYEEFVTMMTCK). The Ca(2+) site is built by Asp21, Asp23, Asp25, Thr27, Glu32, Asp57, Asp59, Asn61, Thr63, Glu68, Asp94, Asp96, Asn98, and Glu105. Lys116 is modified (N6,N6,N6-trimethyllysine). Residues Asp130, Asp132, Asp134, Gln136, and Glu141 each coordinate Ca(2+).

The protein belongs to the calmodulin family.

In terms of biological role, calmodulin mediates the control of a large number of enzymes, ion channels and other proteins by Ca(2+). Among the enzymes to be stimulated by the calmodulin-Ca(2+) complex are a number of protein kinases and phosphatases. In Halocynthia roretzi (Sea squirt), this protein is Calmodulin-B.